A 474-amino-acid chain; its full sequence is Glutamine synthetase (474 aa).

Positions 14–99 (EKIELIDLKF…VCSIKEPRTG (86 aa)) constitute a GS beta-grasp domain. In terms of domain architecture, GS catalytic spans 106–474 (PRVIAQKAID…PYEFSIYYDV (369 aa)). Residues Glu-131 and Glu-133 each coordinate Mg(2+). Glu-211 is an ATP binding site. Residues Glu-216 and Glu-224 each contribute to the Mg(2+) site. Residues 268–269 (NG) and Gly-269 contribute to the L-glutamate site. His-273 serves as a coordination point for Mg(2+). Residues 275–277 (HQS) and Ser-277 each bind ATP. 3 residues coordinate L-glutamate: Arg-325, Glu-331, and Arg-343. ATP-binding residues include Arg-343, Arg-348, and Lys-357. Glu-362 is a Mg(2+) binding site. Arg-364 is an L-glutamate binding site. At Tyr-402 the chain carries O-AMP-tyrosine.

This sequence belongs to the glutamine synthetase family. As to quaternary structure, oligomer of 12 subunits arranged in the form of two hexagons. Mg(2+) serves as cofactor.

Its subcellular location is the cytoplasm. It catalyses the reaction L-glutamate + NH4(+) + ATP = L-glutamine + ADP + phosphate + H(+). The activity of this enzyme could be controlled by adenylation under conditions of abundant glutamine. Involved in nitrogen metabolism via ammonium assimilation. Catalyzes the ATP-dependent biosynthesis of glutamine from glutamate and ammonia. The chain is Glutamine synthetase from Nostoc sp. (strain PCC 7120 / SAG 25.82 / UTEX 2576).